Here is a 187-residue protein sequence, read N- to C-terminus: Protein McbG (187 aa).

This sequence belongs to the pentapeptide repeat protein family.

Functionally, together with proteins McbE and McbF this protein causes immunity to the peptide antibiotic microcin B17 (MccB17), which inhibits DNA replication in Enterobacteriaceae by induction of the SOS repair system. McbG alone can provide some protection. The chain is Protein McbG (mcbG) from Escherichia coli.